Here is a 434-residue protein sequence, read N- to C-terminus: MAASARGLRTLQSAHSSTTVPRLQLAVSRCYATTTSPDPPITNSSNSSNSTPTPKQRITAFKDKLNAGPSFSDFVSGGGGGASNDRVPLDPAEAYALKTALVGPPGRKKQIIRLPSWLKTPIPDTPNYRRIKSDLRGLNLHTVCEEARCPNISDCWGGSSKSAATATIMLMGDTCTRGCRFCSVKTSRTPPPLDPHEPENTAEALSRWGLGYVVMTSVDRDDLADGGARHVAETVRKVKQKAPGILLECLTGDYAGDLEMVALVATSGLDVFAHNVETVEALTPFVRDRRATFQQSLRVLKAAKEARPELITKTSIMLGLGETETQLWETLRALRTVDVDVVTFGQYMRPTKRHMAVHEYVRPGVFDLWKERALEMGFLYCASGPLVRSSYKAGEAFIENVLKKRRGEGADGGDGGNSTRREDVERLVAGGVVR.

The transit peptide at 1–31 (MAASARGLRTLQSAHSSTTVPRLQLAVSRCY) directs the protein to the mitochondrion. Residues 34–54 (TTSPDPPITNSSNSSNSTPTP) show a composition bias toward low complexity. The segment at 34 to 55 (TTSPDPPITNSSNSSNSTPTPK) is disordered. The [4Fe-4S] cluster site is built by cysteine 144, cysteine 149, cysteine 155, cysteine 175, cysteine 179, cysteine 182, and serine 390. The Radical SAM core domain occupies 158–379 (GSSKSAATAT…KERALEMGFL (222 aa)).

Belongs to the radical SAM superfamily. Lipoyl synthase family. Requires [4Fe-4S] cluster as cofactor.

It is found in the mitochondrion. It carries out the reaction [[Fe-S] cluster scaffold protein carrying a second [4Fe-4S](2+) cluster] + N(6)-octanoyl-L-lysyl-[protein] + 2 oxidized [2Fe-2S]-[ferredoxin] + 2 S-adenosyl-L-methionine + 4 H(+) = [[Fe-S] cluster scaffold protein] + N(6)-[(R)-dihydrolipoyl]-L-lysyl-[protein] + 4 Fe(3+) + 2 hydrogen sulfide + 2 5'-deoxyadenosine + 2 L-methionine + 2 reduced [2Fe-2S]-[ferredoxin]. It functions in the pathway protein modification; protein lipoylation via endogenous pathway; protein N(6)-(lipoyl)lysine from octanoyl-[acyl-carrier-protein]: step 2/2. Functionally, catalyzes the radical-mediated insertion of two sulfur atoms into the C-6 and C-8 positions of the octanoyl moiety bound to the lipoyl domains of lipoate-dependent enzymes, thereby converting the octanoylated domains into lipoylated derivatives. The sequence is that of Lipoyl synthase, mitochondrial from Paracoccidioides brasiliensis (strain Pb03).